Consider the following 415-residue polypeptide: Fructose-like permease IIC component (415 aa).

Residues 1-46 lie on the Cytoplasmic side of the membrane; that stretch reads MAIKKRSATVVPGASGAAAAVKNLQASKSSFWGELPQHVMSGISRM. The PTS EIIC type-2 domain maps to 35 to 415; it reads LPQHVMSGIS…RKGKLLIDSL (381 aa). The chain crosses the membrane as a helical span at residues 47-67; it reads VPTLIMGGVILAFSQLIAYSW. The Periplasmic portion of the chain corresponds to 68-101; it reads LKIPAEIGIMDALNSGKFSGFDLSLLKFAWLSQS. The helical transmembrane segment at 102 to 122 threads the bilayer; that stretch reads FGGVLFGFAIPMFAAFVANSI. The Cytoplasmic portion of the chain corresponds to 123-126; it reads GGKL. The helical transmembrane segment at 127–147 threads the bilayer; sequence AFPAGFIGGLMSTQPTQLLNF. At 148 to 157 the chain is on the periplasmic side; that stretch reads DPSTMQWATS. The chain crosses the membrane as a helical span at residues 158–178; sequence SPVPSTFIGALIISIVAGYLV. At 179 to 197 the chain is on the cytoplasmic side; it reads KWMNQKIQLPDFLLAFKTT. The helical transmembrane segment at 198–218 threads the bilayer; sequence FLLPILSAIFVMLAMYYVITP. Residues 219–237 lie on the Periplasmic side of the membrane; it reads FGGWINGGIRTVLTAAGEK. A helical membrane pass occupies residues 238–258; that stretch reads GALMYAMGIAAATAIDLGGPI. Residues 259–276 are Cytoplasmic-facing; that stretch reads NKAAGFVAFSFTTDHVLP. A helical transmembrane segment spans residues 277–297; sequence VTARSIAIVIPPIGLGLATII. Residues 298-318 are Periplasmic-facing; it reads DRRLTGKRLFNAQLYPQGKTA. The helical transmembrane segment at 319–339 threads the bilayer; it reads MFLAFMGISEGAIPFALESPI. Residues 340–341 are Cytoplasmic-facing; that stretch reads TA. The chain crosses the membrane as a helical span at residues 342–362; the sequence is IPSYMVGAIVGSTAAVWLGAV. The Periplasmic portion of the chain corresponds to 363 to 378; the sequence is QWFPESAIWAWPLVTN. The chain crosses the membrane as a helical span at residues 379 to 399; it reads LGVYMAGIALGAIITALMVVF. Topologically, residues 400 to 415 are cytoplasmic; it reads LRLMMFRKGKLLIDSL.

It localises to the cell inner membrane. Its function is as follows. The phosphoenolpyruvate-dependent sugar phosphotransferase system (PTS), a major carbohydrate active -transport system, catalyzes the phosphorylation of incoming sugar substrates concomitant with their translocation across the cell membrane. The polypeptide is Fructose-like permease IIC component (fryC) (Shigella flexneri).